A 741-amino-acid polypeptide reads, in one-letter code: Polyribonucleotide nucleotidyltransferase (741 aa).

Residues aspartate 489 and aspartate 495 each contribute to the Mg(2+) site. The KH domain maps to 556–615 (PKIDSIQIPVDKIKVVIGKGGETIDKIIAETGVTIDIDEEGLVQIFSSDQDAIDRAKTII). The S1 motif domain maps to 625 to 693 (GEVYTVPVVR…EKGRVDASIK (69 aa)). A disordered region spans residues 695–741 (LLPKPEKNEDGENGEEHRHCCCSHHKPDHHNESVEAPKKSDESETKE). 2 stretches are compositionally biased toward basic and acidic residues: residues 698–713 (KPEK…EHRH) and 723–741 (HHNE…ETKE).

The protein belongs to the polyribonucleotide nucleotidyltransferase family. The cofactor is Mg(2+).

The protein localises to the cytoplasm. The enzyme catalyses RNA(n+1) + phosphate = RNA(n) + a ribonucleoside 5'-diphosphate. In terms of biological role, involved in mRNA degradation. Catalyzes the phosphorolysis of single-stranded polyribonucleotides processively in the 3'- to 5'-direction. The protein is Polyribonucleotide nucleotidyltransferase of Streptococcus thermophilus (strain CNRZ 1066).